The following is a 175-amino-acid chain: MKAMERWFNVGKIVNTHGIRGEVRVISRTDFPEERYKKGNKLYIFRERDTEPIEVTVKSHRVHKSFDLLSFEGYDSINDVERFKGAMLKVPESQLGELAEGEYYFHEIIGCTVVTEGGETIGAVKEILTPGANDVWVVRREDGSEALIPYIDEVVLHVDPERKTIIIRPMEGLLE.

In terms of domain architecture, PRC barrel spans 100–173; it reads EGEYYFHEII…TIIIRPMEGL (74 aa).

It belongs to the RimM family. As to quaternary structure, binds ribosomal protein uS19.

It localises to the cytoplasm. In terms of biological role, an accessory protein needed during the final step in the assembly of 30S ribosomal subunit, possibly for assembly of the head region. Essential for efficient processing of 16S rRNA. May be needed both before and after RbfA during the maturation of 16S rRNA. It has affinity for free ribosomal 30S subunits but not for 70S ribosomes. This Geobacillus kaustophilus (strain HTA426) protein is Ribosome maturation factor RimM.